A 20-amino-acid polypeptide reads, in one-letter code: Astacin-like peptidase p18 (20 aa).

Residues Asn-1–Asp-20 enclose the Peptidase M12A domain.

Zn(2+) serves as cofactor.

In terms of biological role, active against casein. Has a role as a digestive enzyme. The protein is Astacin-like peptidase p18 of Argiope aurantia (Black-and-yellow garden spider).